A 333-amino-acid polypeptide reads, in one-letter code: D-fructose 1,6-bisphosphatase class 2/sedoheptulose 1,7-bisphosphatase (333 aa).

Aspartate 33, glutamate 57, aspartate 85, and glutamate 88 together coordinate Mn(2+). Substrate-binding positions include 88–90 (EGT), tyrosine 119, 164–166 (RAR), and 186–188 (DGD). Residue glutamate 213 coordinates Mn(2+).

This sequence belongs to the FBPase class 2 family. In terms of assembly, homotetramer. It depends on Mn(2+) as a cofactor.

The catalysed reaction is beta-D-fructose 1,6-bisphosphate + H2O = beta-D-fructose 6-phosphate + phosphate. The enzyme catalyses D-sedoheptulose 1,7-bisphosphate + H2O = D-sedoheptulose 7-phosphate + phosphate. Its pathway is carbohydrate biosynthesis; Calvin cycle. Its function is as follows. Catalyzes the hydrolysis of fructose 1,6-bisphosphate (Fru 1,6-P2) and sedoheptulose 1,7-bisphosphate (Sed 1,7-P2) to fructose 6-phosphate and sedoheptulose 7-phosphate, respectively. The protein is D-fructose 1,6-bisphosphatase class 2/sedoheptulose 1,7-bisphosphatase of Prochlorococcus marinus (strain MIT 9515).